Reading from the N-terminus, the 175-residue chain is Photosynthetic NDH subunit of subcomplex B 4, chloroplastic (175 aa).

The transit peptide at 1–24 directs the protein to the chloroplast; sequence MAEAFTSFTFTNLHIPSSYNHSPK. A helical transmembrane segment spans residues 95–111; the sequence is VYMFYIMFTCWGCLYFG.

In terms of assembly, part of the chloroplast NDH complex, composed of a mixture of chloroplast and nucleus encoded subunits. Component of the NDH subcomplex B, at least composed of PnsB1, PnsB2, PnsB3, PnsB4 and PnsB5.

It is found in the plastid. The protein localises to the chloroplast thylakoid membrane. In terms of biological role, NDH shuttles electrons from NAD(P)H:plastoquinone, via FMN and iron-sulfur (Fe-S) centers, to quinones in the photosynthetic chain and possibly in a chloroplast respiratory chain. The immediate electron acceptor for the enzyme in this species is believed to be plastoquinone. Couples the redox reaction to proton translocation, and thus conserves the redox energy in a proton gradient. This chain is Photosynthetic NDH subunit of subcomplex B 4, chloroplastic, found in Arabidopsis thaliana (Mouse-ear cress).